The sequence spans 1446 residues: E3 ubiquitin-protein ligase listerin (1446 aa).

11 HEAT repeats span residues 71–108, 115–153, 324–361, 363–399, 413–450, 630–669, 684–721, 1046–1083, 1107–1144, 1165–1202, and 1251–1289; these read QTREKGLKELMELINTENSSIESSYEHFCGLVAQLTTD, MLTMKVISQFLTKLKKSASKGLKKIIPFVLFAKSDVTNG, SLQKGIYPRLLNLIRKKGNHWRVLKHYLLPAVSVLLQK, ENPALITSIITSFTDNLPWQAEASMNAIHCWFCTFSD, EILKDLSPLIVEMSNQSMHFNTAEATECISGLIHWIIE, AENVDFLISLLQSLDSKEDPEERKNLVLKLLSALFDAEDE, GDFEQFFEKLFANMEEEDAERVLEIAARFDKLVGFCDA, LRALFVISEFPTSFSNDDDVANQEFIPELSVFKYPAFQ, SVARLLMPIMFKLENAAALKSNEDSELPVSTNRRKLSL, LLDLTLLPLENTKDSGFSQEHRVAYCDVIDPFFKNALN, and FKSMTLLPAAIRLFYKGMPNCFMPMFQETVTKYASRLLI. The segment at 1395–1442 adopts an RING-type zinc-finger fold; that stretch reads CTICMMTVHQQTHQLPKIKCKQCKNKFHSNCLYKWFESSNQSTCPLCR.

It belongs to the LTN1 family. Component of the ribosome quality control complex (RQC), composed of at least the E3 ubiquitin ligase ltn1 and nemf. The complex probably also contains tcf25 as well as vcp/p97 and its ubiquitin-binding cofactors. RQC forms a stable complex with 60S ribosomal subunits.

The protein localises to the cytoplasm. It localises to the cytosol. It catalyses the reaction S-ubiquitinyl-[E2 ubiquitin-conjugating enzyme]-L-cysteine + [acceptor protein]-L-lysine = [E2 ubiquitin-conjugating enzyme]-L-cysteine + N(6)-ubiquitinyl-[acceptor protein]-L-lysine.. Its pathway is protein modification; protein ubiquitination. Its function is as follows. E3 ubiquitin-protein ligase. Component of the ribosome quality control complex (RQC), a ribosome-associated complex that mediates ubiquitination and extraction of incompletely synthesized nascent chains for proteasomal degradation. Ubiquitination leads to vcp/p97 recruitment for extraction and degradation of the incomplete translation product. The protein is E3 ubiquitin-protein ligase listerin of Caenorhabditis elegans.